Here is a 364-residue protein sequence, read N- to C-terminus: Uroporphyrinogen decarboxylase (364 aa).

Substrate is bound by residues 28–32, F47, D78, Y158, T213, and H334; that span reads RQAGR.

Belongs to the uroporphyrinogen decarboxylase family. In terms of assembly, homodimer.

The protein localises to the cytoplasm. It catalyses the reaction uroporphyrinogen III + 4 H(+) = coproporphyrinogen III + 4 CO2. The protein operates within porphyrin-containing compound metabolism; protoporphyrin-IX biosynthesis; coproporphyrinogen-III from 5-aminolevulinate: step 4/4. Catalyzes the decarboxylation of four acetate groups of uroporphyrinogen-III to yield coproporphyrinogen-III. In Ralstonia nicotianae (strain ATCC BAA-1114 / GMI1000) (Ralstonia solanacearum), this protein is Uroporphyrinogen decarboxylase.